The primary structure comprises 82 residues: Sec-independent protein translocase protein TatA (82 aa).

Residues 1-21 (MGSLSIWHWLIVGAVVLLVFG) traverse the membrane as a helical segment. Residues 43-82 (GLSEDEEKAEAKPVGEPSLRSLDHQGAGDPLKTPDARKIG) are disordered.

It belongs to the TatA/E family. In terms of assembly, the Tat system comprises two distinct complexes: a TatABC complex, containing multiple copies of TatA, TatB and TatC subunits, and a separate TatA complex, containing only TatA subunits. Substrates initially bind to the TatABC complex, which probably triggers association of the separate TatA complex to form the active translocon.

It is found in the cell inner membrane. Functionally, part of the twin-arginine translocation (Tat) system that transports large folded proteins containing a characteristic twin-arginine motif in their signal peptide across membranes. TatA could form the protein-conducting channel of the Tat system. This chain is Sec-independent protein translocase protein TatA, found in Methylocella silvestris (strain DSM 15510 / CIP 108128 / LMG 27833 / NCIMB 13906 / BL2).